The sequence spans 262 residues: Ribose-5-phosphate isomerase A (262 aa).

Residues 33 to 36, 89 to 92, and 102 to 105 contribute to the substrate site; these read TGST, DGTD, and KGGG. Glu111 functions as the Proton acceptor in the catalytic mechanism. Residue Lys129 participates in substrate binding.

Belongs to the ribose 5-phosphate isomerase family. Homodimer.

It catalyses the reaction aldehydo-D-ribose 5-phosphate = D-ribulose 5-phosphate. It functions in the pathway carbohydrate degradation; pentose phosphate pathway; D-ribose 5-phosphate from D-ribulose 5-phosphate (non-oxidative stage): step 1/1. Its function is as follows. Catalyzes the reversible conversion of ribose-5-phosphate to ribulose 5-phosphate. This Jannaschia sp. (strain CCS1) protein is Ribose-5-phosphate isomerase A.